The chain runs to 333 residues: MIDTTLPLTDIHRHLDGNIRPQTILELGRQYNILLPAQSLETLIPHVQVIANEPDLVSFLTKLDWGVKVLASLDACRRVAFENIEDAARNGLHYVELHFSPGYMAMAHQLPVAGVVEAVIDGVREGCRTFGVQAKLIGIMSRTFGEAACQQELEAFLAHRDQITALDLAGDKLGFPGSLFLSHFNRARDAGWHITVHAGEAAGPESIWQAIRELGAERIGHGVKAIEDRALMDFLAEQQIGIESCLTSNIQTSTVADLAAHPLKTFLEHGIRASINTDDPGVQGVDIIHEYTVAAPAAGLSREQIRQAQINGLEMAFLSAEEKRALREKVAAK.

Residues H12 and H14 each contribute to the Zn(2+) site. Substrate is bound by residues H14, D16, and G170. H197 lines the Zn(2+) pocket. E200 (proton donor) is an active-site residue. D278 is a Zn(2+) binding site. D279 is a substrate binding site.

The protein belongs to the metallo-dependent hydrolases superfamily. Adenosine and AMP deaminases family. Adenosine deaminase subfamily. Zn(2+) is required as a cofactor.

The enzyme catalyses adenosine + H2O + H(+) = inosine + NH4(+). It catalyses the reaction 2'-deoxyadenosine + H2O + H(+) = 2'-deoxyinosine + NH4(+). Catalyzes the hydrolytic deamination of adenosine and 2-deoxyadenosine. The sequence is that of Adenosine deaminase from Escherichia coli O81 (strain ED1a).